We begin with the raw amino-acid sequence, 145 residues long: D-aminoacyl-tRNA deacylase (145 aa).

Residues 137 to 138 (GP) carry the Gly-cisPro motif, important for rejection of L-amino acids motif.

This sequence belongs to the DTD family. In terms of assembly, homodimer.

It localises to the cytoplasm. The catalysed reaction is glycyl-tRNA(Ala) + H2O = tRNA(Ala) + glycine + H(+). The enzyme catalyses a D-aminoacyl-tRNA + H2O = a tRNA + a D-alpha-amino acid + H(+). Its function is as follows. An aminoacyl-tRNA editing enzyme that deacylates mischarged D-aminoacyl-tRNAs. Also deacylates mischarged glycyl-tRNA(Ala), protecting cells against glycine mischarging by AlaRS. Acts via tRNA-based rather than protein-based catalysis; rejects L-amino acids rather than detecting D-amino acids in the active site. By recycling D-aminoacyl-tRNA to D-amino acids and free tRNA molecules, this enzyme counteracts the toxicity associated with the formation of D-aminoacyl-tRNA entities in vivo and helps enforce protein L-homochirality. In Legionella pneumophila (strain Paris), this protein is D-aminoacyl-tRNA deacylase.